Consider the following 431-residue polypeptide: Na(+)-translocating NADH-quinone reductase subunit F (431 aa).

A helical membrane pass occupies residues 10 to 30; that stretch reads ISIASLVFCVIGLILSGIILI. The 2Fe-2S ferredoxin-type domain maps to 41 to 133; it reads CKLKINDDDS…DMCLEIEERY (93 aa). [2Fe-2S] cluster-binding residues include C76, C82, C85, and C117. The region spanning 136 to 286 is the FAD-binding FR-type domain; sequence ASSWEGTVVS…SGPYGESFMK (151 aa).

The protein belongs to the NqrF family. Composed of six subunits; NqrA, NqrB, NqrC, NqrD, NqrE and NqrF. The cofactor is [2Fe-2S] cluster. FAD is required as a cofactor.

The protein localises to the cell inner membrane. The catalysed reaction is a ubiquinone + n Na(+)(in) + NADH + H(+) = a ubiquinol + n Na(+)(out) + NAD(+). Functionally, NQR complex catalyzes the reduction of ubiquinone-1 to ubiquinol by two successive reactions, coupled with the transport of Na(+) ions from the cytoplasm to the periplasm. The first step is catalyzed by NqrF, which accepts electrons from NADH and reduces ubiquinone-1 to ubisemiquinone by a one-electron transfer pathway. The protein is Na(+)-translocating NADH-quinone reductase subunit F of Chlamydia caviae (strain ATCC VR-813 / DSM 19441 / 03DC25 / GPIC) (Chlamydophila caviae).